The following is a 139-amino-acid chain: NADPH-dependent 7-cyano-7-deazaguanine reductase (139 aa).

The active-site Thioimide intermediate is the C34. The Proton donor role is filled by D41. Substrate is bound by residues 56–58 (VEL) and 75–76 (HE).

The protein belongs to the GTP cyclohydrolase I family. QueF type 1 subfamily.

It is found in the cytoplasm. The enzyme catalyses 7-aminomethyl-7-carbaguanine + 2 NADP(+) = 7-cyano-7-deazaguanine + 2 NADPH + 3 H(+). It participates in tRNA modification; tRNA-queuosine biosynthesis. In terms of biological role, catalyzes the NADPH-dependent reduction of 7-cyano-7-deazaguanine (preQ0) to 7-aminomethyl-7-deazaguanine (preQ1). In Thiobacillus denitrificans (strain ATCC 25259 / T1), this protein is NADPH-dependent 7-cyano-7-deazaguanine reductase.